The sequence spans 446 residues: Phosphoglucosamine mutase (446 aa).

Ser-100 (phosphoserine intermediate) is an active-site residue. The Mg(2+) site is built by Ser-100, Asp-239, Asp-241, and Asp-243. At Ser-100 the chain carries Phosphoserine.

It belongs to the phosphohexose mutase family. The cofactor is Mg(2+). Activated by phosphorylation.

It catalyses the reaction alpha-D-glucosamine 1-phosphate = D-glucosamine 6-phosphate. In terms of biological role, catalyzes the conversion of glucosamine-6-phosphate to glucosamine-1-phosphate. In Shouchella clausii (strain KSM-K16) (Alkalihalobacillus clausii), this protein is Phosphoglucosamine mutase.